The following is a 279-amino-acid chain: Phosphonates import ATP-binding protein PhnC (279 aa).

Residues 2-245 (FQLKNVTRQF…AVAAIYGAET (244 aa)) enclose the ABC transporter domain. 34–41 (GRSGAGKS) contacts ATP.

The protein belongs to the ABC transporter superfamily. Phosphonates importer (TC 3.A.1.9.1) family. The complex is composed of two ATP-binding proteins (PhnC), two transmembrane proteins (PhnE) and a solute-binding protein (PhnD).

It is found in the cell inner membrane. The catalysed reaction is phosphonate(out) + ATP + H2O = phosphonate(in) + ADP + phosphate + H(+). In terms of biological role, part of the ABC transporter complex PhnCDE involved in phosphonates import. Responsible for energy coupling to the transport system. This Rhizobium meliloti (strain 1021) (Ensifer meliloti) protein is Phosphonates import ATP-binding protein PhnC.